A 160-amino-acid chain; its full sequence is MRLVVIAIGRLKQGPERELADRYRGRFDDIGRKLGFRGFDVHEIPESRARDAKQRIREEAAAILALAPEGAVLVALDEKGKNIDSAAFADHLGRWRDESVTSTVFAVGGADGLSPELRRKARLSVAFGAATWPHQIVRVMLLEQIYRAATILAGHPYHRG.

Residues Leu76 and Gly108 each coordinate S-adenosyl-L-methionine.

The protein belongs to the RNA methyltransferase RlmH family. As to quaternary structure, homodimer.

The protein resides in the cytoplasm. It carries out the reaction pseudouridine(1915) in 23S rRNA + S-adenosyl-L-methionine = N(3)-methylpseudouridine(1915) in 23S rRNA + S-adenosyl-L-homocysteine + H(+). In terms of biological role, specifically methylates the pseudouridine at position 1915 (m3Psi1915) in 23S rRNA. This is Ribosomal RNA large subunit methyltransferase H from Nitrobacter hamburgensis (strain DSM 10229 / NCIMB 13809 / X14).